Reading from the N-terminus, the 162-residue chain is UPF0114 protein Psyr_4257 (162 aa).

4 helical membrane-spanning segments follow: residues 15–35 (LLAP…LKFF), 53–73 (LILV…LVMV), 109–129 (VAAS…MDAT), and 136–156 (LMWY…MGYL).

It belongs to the UPF0114 family.

The protein resides in the cell membrane. This is UPF0114 protein Psyr_4257 from Pseudomonas syringae pv. syringae (strain B728a).